The following is a 418-amino-acid chain: E3 ubiquitin-protein ligase makorin-2 (418 aa).

2 C3H1-type zinc fingers span residues 2–29 (NTKH…HDLA) and 31–58 (SKPS…HVKP). The interval 76–100 (ESTPPLLPTQEAAAPVTKSAPQRRE) is disordered. The C3H1-type 3 zinc finger occupies 164–191 (DAPQQLCPFAQAGGCHYGESCPYIHGNV). The interval 192 to 221 (CEICGLQVLHPYDQEQRGHHEKLCMANFER) is makorin-type Cys-His. Residues 237–291 (CSICMERVYDKQSPSERRFGILSNCHHTYCLACIRQWRCARQFENPVIKSCPECR) form an RING-type zinc finger. The segment at 320 to 349 (GMGKKACKYFDQGRGTCPFGGKCLYLHAYP) adopts a C3H1-type 4 zinc-finger fold.

It localises to the cytoplasm. The protein resides in the nucleus. It catalyses the reaction S-ubiquitinyl-[E2 ubiquitin-conjugating enzyme]-L-cysteine + [acceptor protein]-L-lysine = [E2 ubiquitin-conjugating enzyme]-L-cysteine + N(6)-ubiquitinyl-[acceptor protein]-L-lysine.. The protein operates within protein modification; protein ubiquitination. Functionally, E3 ubiquitin ligase catalyzing the covalent attachment of ubiquitin moieties onto substrate proteins. Inhibits neurogenesis and axis formation during embryonic development by modulating the phosphatidylinositol 3-kinase (PI3K) pathway. Acts downstream of PI3K and akt1 to up-regulate gsk3b mRNA expression. The polypeptide is E3 ubiquitin-protein ligase makorin-2 (mkrn2) (Xenopus tropicalis (Western clawed frog)).